A 140-amino-acid polypeptide reads, in one-letter code: Putative pre-16S rRNA nuclease (140 aa).

This sequence belongs to the YqgF nuclease family.

Its subcellular location is the cytoplasm. Functionally, could be a nuclease involved in processing of the 5'-end of pre-16S rRNA. This chain is Putative pre-16S rRNA nuclease, found in Moorella thermoacetica (strain ATCC 39073 / JCM 9320).